Reading from the N-terminus, the 474-residue chain is Tubulin gamma-2 chain (474 aa).

Position 142–148 (142–148 (AGGTGSG)) interacts with GTP.

Belongs to the tubulin family. As to quaternary structure, gamma-tubulin complex is composed of gamma-tubulin and GCP proteins.

It localises to the cytoplasm. The protein localises to the cytoskeleton. Its subcellular location is the microtubule organizing center. It is found in the nucleus. The protein resides in the cell cortex. Functionally, tubulin is the major constituent of microtubules. The gamma chain is found at microtubule organizing centers (MTOC) such as the spindle poles, suggesting that it is involved in the minus-end nucleation of microtubule assembly. Gamma-tubulin complex is essential for the control of microtubular network remodeling in the course of initiation and development of giant-feeding cells, and for the successful reproduction of nematodes (e.g. Meloidogyne spp.) in their plant hosts. The protein is Tubulin gamma-2 chain (TUBG2) of Arabidopsis thaliana (Mouse-ear cress).